We begin with the raw amino-acid sequence, 173 residues long: Trafficking regulator of GLUT4 1 (173 aa).

Pro residues predominate over residues 1 to 10 (MANPAQPPLQ). Residues 1-20 (MANPAQPPLQDPGSTSPLEL) are disordered. Residues 1 to 102 (MANPAQPPLQ…QDQEAPKDYL (102 aa)) are Cytoplasmic-facing. Residues Ser16, Ser43, Ser45, Ser70, Ser84, and Ser85 each carry the phosphoserine modification. The helical intramembrane region spans 103 to 123 (VLAIASCFCPVWPLNLIPLIF). Residues 124–150 (SIMSRSSVQQGDLDGARRLGRLARLLS) are Cytoplasmic-facing. The helical transmembrane segment at 151-171 (ITFIILGIVIIIVAVTVNFTV) threads the bilayer. At 172 to 173 (PK) the chain is on the extracellular side.

The protein belongs to the CD225/Dispanin family. In terms of assembly, interacts with SLC2A4; the interaction is required for proper SLC2A4 reacycling after insulin stimulation. As to expression, expressed specifically in white and brown adipose tissues.

The protein resides in the cell membrane. The protein localises to the endomembrane system. Its subcellular location is the cytoplasm. It is found in the perinuclear region. Functionally, regulates insulin-mediated adipose tissue glucose uptake and transport by modulation of SLC2A4 recycling. Not required for SLC2A4 membrane fusion upon an initial stimulus, but rather is necessary for proper protein recycling during prolonged insulin stimulation. The chain is Trafficking regulator of GLUT4 1 (Trarg1) from Mus musculus (Mouse).